The chain runs to 217 residues: 3-isopropylmalate dehydratase small subunit (217 aa).

This sequence belongs to the LeuD family. LeuD type 1 subfamily. In terms of assembly, heterodimer of LeuC and LeuD.

It catalyses the reaction (2R,3S)-3-isopropylmalate = (2S)-2-isopropylmalate. The protein operates within amino-acid biosynthesis; L-leucine biosynthesis; L-leucine from 3-methyl-2-oxobutanoate: step 2/4. Functionally, catalyzes the isomerization between 2-isopropylmalate and 3-isopropylmalate, via the formation of 2-isopropylmaleate. In Paraburkholderia phymatum (strain DSM 17167 / CIP 108236 / LMG 21445 / STM815) (Burkholderia phymatum), this protein is 3-isopropylmalate dehydratase small subunit.